The following is a 789-amino-acid chain: Leucine-rich repeat and fibronectin type-III domain-containing protein 2 (789 aa).

A signal peptide spans 1-20; the sequence is METLLGGLLAFGMAFAVVDA. In terms of domain architecture, LRRNT spans 21–52; that stretch reads CPKYCVCQNLSESLGTLCPSKGLLFVPPDIDR. At 21–534 the chain is on the extracellular side; the sequence is CPKYCVCQNL…MHSQILGGTM (514 aa). The N-linked (GlcNAc...) asparagine glycan is linked to N29. LRR repeat units follow at residues 53–74, 77–98, 101–122, 125–146, 150–171, 174–195, and 198–219; these read RTVE…DFAN, GLVD…SFLD, SLRS…TLRG, NLQH…AFED, TLED…SVRR, NLHQ…TFAD, and KLAR…PIFA. The LRRCT domain occupies 242 to 288; that stretch reads NPLHCNCELLWLRRLERDDDLETCGSPGGLKGRYFWHVREEEFVCEP. The 87-residue stretch at 289 to 375 folds into the Ig-like domain; it reads PLITQHTHKL…GEATAMVEVS (87 aa). A disulfide bond links C310 and C359. N-linked (GlcNAc...) asparagine glycans are attached at residues N332, N341, and N384. Positions 383 to 424 are disordered; the sequence is SNSTSRTAPPKSRLSDITGSSKTSRGGGGSGGGEPPKSPPER. A compositionally biased stretch (gly residues) spans 407–416; sequence RGGGGSGGGE. Residues 421 to 518 enclose the Fibronectin type-III domain; sequence PPERAVLVSE…GCAQFFTKAD (98 aa). The chain crosses the membrane as a helical span at residues 535 to 555; it reads ILVIGGIIVATLLVFIVILMV. The Cytoplasmic portion of the chain corresponds to 556 to 789; it reads RYKVCNHEAP…SSEWVMESTV (234 aa). 3 disordered regions span residues 577 to 602, 619 to 654, and 668 to 702; these read SQTN…PPKV, SDSS…PSLD, and QRKE…LGPP. Residues 583-599 are compositionally biased toward pro residues; sequence QPPPPSSAPAGAPPQGP. Low complexity predominate over residues 619–638; it reads SDSSSSSSLGSGEAAGLGRA. A compositionally biased stretch (pro residues) spans 641–650; the sequence is RIPPSAPRPK. The short motif at 786-789 is the PDZ-binding element; sequence ESTV.

This sequence belongs to the LRFN family. In terms of assembly, forms heteromeric complexes with LRFN1, LRFN3, LRFN4 and LRFN5. Can form homomeric complexes, but not across cell junctions. Directly interacts with 2 NMDA receptor subunits GRIN1 and GRIN2A. Interacts with DLG1, DLG2, DLG3 and DLG4. Post-translationally, glycosylated.

The protein localises to the membrane. Its subcellular location is the synapse. It is found in the postsynaptic cell membrane. Its function is as follows. Promotes neurite outgrowth in hippocampal neurons. Enhances the cell surface expression of 2 NMDA receptor subunits GRIN1 and GRIN2A. May play a role in redistributing DLG4 to the cell periphery. This chain is Leucine-rich repeat and fibronectin type-III domain-containing protein 2 (LRFN2), found in Homo sapiens (Human).